A 461-amino-acid polypeptide reads, in one-letter code: Gram-negative bacteria-binding protein 2 (461 aa).

Positions 1–20 are cleaved as a signal peptide; it reads MRWEFLPCLLLLISNNKIFG. Positions 21 to 115 constitute a CBM39 domain; sequence FKVPSINFEM…TRVIINTRLL (95 aa). Residues asparagine 71, asparagine 170, asparagine 177, and asparagine 364 are each glycosylated (N-linked (GlcNAc...) asparagine). Residues 179-461 form the GH16 domain; sequence TTWKHDIRQR…VIDYVRVYAE (283 aa).

Belongs to the insect beta-1,3-glucan binding protein family.

The protein resides in the secreted. Functionally, involved in the recognition of invading microorganisms. Binds specifically to beta-1,3-glucan and activates the phenoloxidase cascade. This Drosophila melanogaster (Fruit fly) protein is Gram-negative bacteria-binding protein 2.